The primary structure comprises 695 residues: Translation initiation factor IF-2 (695 aa).

The tract at residues 60 to 92 is disordered; it reads KKSASSKKKTEKEVEEEEIETPKKKKKQEEKIP. The region spanning 184-358 is the tr-type G domain; it reads QRPPVVTVMG…EMSEIKCIPT (175 aa). The tract at residues 193–200 is G1; sequence GHVDHGKT. A GTP-binding site is contributed by 193-200; sequence GHVDHGKT. Residues 218-222 form a G2 region; that stretch reads GITQS. Positions 239 to 242 are G3; the sequence is DTPG. GTP is bound by residues 239–243 and 293–296; these read DTPGH and NKID. The G4 stretch occupies residues 293–296; it reads NKID. The G5 stretch occupies residues 330–332; the sequence is SAK.

The protein belongs to the TRAFAC class translation factor GTPase superfamily. Classic translation factor GTPase family. IF-2 subfamily.

The protein localises to the cytoplasm. Functionally, one of the essential components for the initiation of protein synthesis. Protects formylmethionyl-tRNA from spontaneous hydrolysis and promotes its binding to the 30S ribosomal subunits. Also involved in the hydrolysis of GTP during the formation of the 70S ribosomal complex. This is Translation initiation factor IF-2 from Kosmotoga olearia (strain ATCC BAA-1733 / DSM 21960 / TBF 19.5.1).